The sequence spans 157 residues: Probable succinate transporter subunit YjjB (157 aa).

The next 4 helical transmembrane spans lie at L8–F28, M50–V70, V87–I107, and F129–W149.

Belongs to the ThrE exporter (TC 2.A.79) family. In terms of assembly, the transporter is composed of YjjB and YjjP.

The protein resides in the cell inner membrane. Its function is as follows. Involved in succinate export with YjjP. Both proteins are required for export. This chain is Probable succinate transporter subunit YjjB, found in Escherichia coli O1:K1 / APEC.